We begin with the raw amino-acid sequence, 199 residues long: Chaperone protein TorD (199 aa).

This sequence belongs to the TorD/DmsD family. TorD subfamily.

It localises to the cytoplasm. Involved in the biogenesis of TorA. Acts on TorA before the insertion of the molybdenum cofactor and, as a result, probably favors a conformation of the apoenzyme that is competent for acquiring the cofactor. In Escherichia coli O6:H1 (strain CFT073 / ATCC 700928 / UPEC), this protein is Chaperone protein TorD.